We begin with the raw amino-acid sequence, 666 residues long: tRNA 5-methylaminomethyl-2-thiouridine biosynthesis bifunctional protein MnmC (666 aa).

Positions 1 to 253 (MSSPFAPIIT…KRHMLCAYYE (253 aa)) are tRNA (mnm(5)s(2)U34)-methyltransferase. The tract at residues 283-666 (VGGGLAGCFI…FLRKKIIQGP (384 aa)) is FAD-dependent cmnm(5)s(2)U34 oxidoreductase.

The protein in the N-terminal section; belongs to the methyltransferase superfamily. tRNA (mnm(5)s(2)U34)-methyltransferase family. This sequence in the C-terminal section; belongs to the DAO family. FAD serves as cofactor.

It is found in the cytoplasm. The catalysed reaction is 5-aminomethyl-2-thiouridine(34) in tRNA + S-adenosyl-L-methionine = 5-methylaminomethyl-2-thiouridine(34) in tRNA + S-adenosyl-L-homocysteine + H(+). Functionally, catalyzes the last two steps in the biosynthesis of 5-methylaminomethyl-2-thiouridine (mnm(5)s(2)U) at the wobble position (U34) in tRNA. Catalyzes the FAD-dependent demodification of cmnm(5)s(2)U34 to nm(5)s(2)U34, followed by the transfer of a methyl group from S-adenosyl-L-methionine to nm(5)s(2)U34, to form mnm(5)s(2)U34. The polypeptide is tRNA 5-methylaminomethyl-2-thiouridine biosynthesis bifunctional protein MnmC (Legionella pneumophila (strain Corby)).